The following is an 84-amino-acid chain: Putative membrane protein insertion efficiency factor (84 aa).

This sequence belongs to the UPF0161 family.

It is found in the cell inner membrane. Its function is as follows. Could be involved in insertion of integral membrane proteins into the membrane. This Acidiphilium cryptum (strain JF-5) protein is Putative membrane protein insertion efficiency factor.